The primary structure comprises 508 residues: Protein adenylyltransferase Fic (508 aa).

A helical membrane pass occupies residues Phe-48–Ser-70. TPR repeat units follow at residues Ala-132 to His-165 and Pro-166 to Asn-200. The Inhibitory (S/T)XXXE(G/N) motif signature appears at Ser-257–Gly-262. ATP contacts are provided by residues Glu-261 and Val-342–His-345. Residues Ile-311–Asp-446 enclose the Fido domain. His-389 is a catalytic residue. ATP contacts are provided by residues Asp-393 to Arg-400, Tyr-425 to Tyr-426, and Asn-433.

It belongs to the fic family. Homodimer.

It localises to the membrane. The enzyme catalyses L-tyrosyl-[protein] + ATP = O-(5'-adenylyl)-L-tyrosyl-[protein] + diphosphate. It catalyses the reaction L-threonyl-[protein] + ATP = 3-O-(5'-adenylyl)-L-threonyl-[protein] + diphosphate. The catalysed reaction is 3-O-(5'-adenylyl)-L-threonyl-[protein] + H2O = L-threonyl-[protein] + AMP + H(+). The side chain of Glu-261 determines which of the two opposing activities (AMPylase or de-AMPylase) will take place. In response to endoplasmic reticulum stress, mediates de-AMPylase activity. Adenylyltransferase activity is inhibited by the inhibitory helix present at the N-terminus: Glu-261 binds ATP and competes with ATP-binding at Arg-400, thereby preventing adenylyltransferase activity. In unstressed cells, disengagement of Glu-261 promotes adenylyltransferase activity. Activation dissociates ATP-binding from Glu-261, allowing ordered binding of the entire ATP moiety with the alpha-phosphate in an orientation that is productive for accepting an incoming target hydroxyl side chain. Functionally, protein that can both mediate the addition of adenosine 5'-monophosphate (AMP) to specific residues of target proteins (AMPylation), and the removal of the same modification from target proteins (de-AMPylation), depending on the context. The side chain of Glu-261 determines which of the two opposing activities (AMPylase or de-AMPylase) will take place. Acts as a key regulator of the unfolded protein response (UPR) by mediating AMPylation or de-AMPylation of Hsc70-3/BiP. In unstressed cells, acts as an adenylyltransferase by mediating AMPylation of Hsc70-3/BiP at 'Thr-518', thereby inactivating it. In response to endoplasmic reticulum stress, acts as a phosphodiesterase by mediating removal of ATP (de-AMPylation) from Hsc70-3/BiP at 'Thr-518', leading to restore HSPA5/BiP activity. The chain is Protein adenylyltransferase Fic from Drosophila persimilis (Fruit fly).